The sequence spans 956 residues: F-box only protein 10 (956 aa).

Residues 1-48 form the F-box domain; it reads MEAGGLPLELWRMILAYLHLPDLGRCSLVCRAWYELILSLDSTRWRQL. PbH1 repeat units lie at residues 198 to 217 and 238 to 260; these read SGHV…QVHG and VPLC…TVEG. Residues 314 to 367 are disordered; the sequence is EGSQSPTSPASSSPKPGSKAGSQEAEVGSDGERVAQTPDSSDGGLSPSGEDEDE. Composition is skewed to low complexity over residues 316–336 and 351–361; these read SQSP…AGSQ and PDSSDGGLSPS. Residues Ser-321 and Ser-326 each carry the phosphoserine modification. PbH1 repeat units follow at residues 427-448, 449-470, 471-493, 494-516, 538-560, 561-583, 584-606, 607-629, 630-652, 653-675, 717-739, 740-762, 764-786, 787-809, and 832-854; these read VQGC…FVCS, HGRA…RCIH, NSKI…FLRL, EGGG…DIRK, LGNG…GIYI, LYHG…GIAV, NENG…GVDI, RRGG…GVVV, GDEG…GVWM, MSSS…GVAV, RPIT…GLYV, QSSE…GITV, QSSQ…GVKV, EAQC…GIIT, and LPRS…GIAV.

Component of the SCF(FBXO10) complex consisting of CUL1, SKP1 and FBXO10. Interacts with BCL2. Interacts with PRDM1.

The protein resides in the cytoplasm. It participates in protein modification; protein ubiquitination. Its function is as follows. Substrate-recognition component of the SCF (SKP1-CUL1-F-box protein)-type E3 ubiquitin ligase complex. Mediates the ubiquitination and degradation of BCL2, an antiapoptotic protein, thereby playing a role in apoptosis by controlling the stability of BCL2. Targets also the receptor for advanced glycation end products RAGE for ubiquitination and subsequent lysosomal degradation. Directly controls HGAL/GCSAM ubiquitination and degradation and thereby decreases BCR signaling. This Homo sapiens (Human) protein is F-box only protein 10 (FBXO10).